The primary structure comprises 272 residues: 5'-nucleotidase SurE (272 aa).

4 residues coordinate a divalent metal cation: aspartate 8, aspartate 9, serine 39, and asparagine 96.

It belongs to the SurE nucleotidase family. A divalent metal cation is required as a cofactor.

The protein localises to the cytoplasm. It catalyses the reaction a ribonucleoside 5'-phosphate + H2O = a ribonucleoside + phosphate. Nucleotidase that shows phosphatase activity on nucleoside 5'-monophosphates. The polypeptide is 5'-nucleotidase SurE (Heliobacterium modesticaldum (strain ATCC 51547 / Ice1)).